The sequence spans 286 residues: Large ribosomal subunit protein uL2 (286 aa).

Disordered regions lie at residues 22-59 (KELTPGYTPERSLLRPKTKTGGRNNQGKITSRHRGGGH) and 215-286 (LGRR…KLHK). Residues 230–240 (DHPHGGGEGRT) are compositionally biased toward basic and acidic residues. Residues 255–286 (KGGRTRQKRKPSNSSIVRRRKSRRYGQLKLHK) show a composition bias toward basic residues.

The protein belongs to the universal ribosomal protein uL2 family. Part of the 50S ribosomal subunit. Forms a bridge to the 30S subunit in the 70S ribosome.

Its function is as follows. One of the primary rRNA binding proteins. Required for association of the 30S and 50S subunits to form the 70S ribosome, for tRNA binding and peptide bond formation. It has been suggested to have peptidyltransferase activity; this is somewhat controversial. Makes several contacts with the 16S rRNA in the 70S ribosome. This Rhodopirellula baltica (strain DSM 10527 / NCIMB 13988 / SH1) protein is Large ribosomal subunit protein uL2.